We begin with the raw amino-acid sequence, 559 residues long: NXPE family member 3 (559 aa).

Residues 1–30 (MWTNFFKLRLFCCLLAVLMVVVLVINVTQV) form the signal peptide. Asparagine 237, asparagine 292, and asparagine 346 each carry an N-linked (GlcNAc...) asparagine glycan.

It belongs to the NXPE family.

The protein localises to the secreted. The protein is NXPE family member 3 (NXPE3) of Homo sapiens (Human).